We begin with the raw amino-acid sequence, 137 residues long: Flagellar basal body rod protein FlgB (137 aa).

Belongs to the flagella basal body rod proteins family. As to quaternary structure, the basal body constitutes a major portion of the flagellar organelle and consists of a number of rings mounted on a central rod. In Gram-negative bacteria, at least four rings, L, P, S and M are present, whereas Gram-positive bacteria lack the L and P rings. The rod consists of about 26 subunits of FlgG in the distal portion, and FlgB, FlgC and FlgF build up the proximal portion of the rod with about 6 subunits each. Rod assembly occurs by export via the flagellum-specific pathway of its constituent proteins and by their incorporation into the rod structure in the probable order of FlgB, FlgC, FlgF and FlgG. Another protein, FliE, also assembles onto the stable rod structure.

It is found in the bacterial flagellum basal body. In terms of biological role, structural component of flagellum, the bacterial motility apparatus. Part of the rod structure of flagellar basal body. The sequence is that of Flagellar basal body rod protein FlgB from Proteus mirabilis (strain HI4320).